Reading from the N-terminus, the 293-residue chain is Nucleotide-binding protein BCG9842_B5683 (293 aa).

Residue 14-21 (GMSGAGKT) coordinates ATP. 65 to 68 (DLRG) serves as a coordination point for GTP.

This sequence belongs to the RapZ-like family.

Its function is as follows. Displays ATPase and GTPase activities. The polypeptide is Nucleotide-binding protein BCG9842_B5683 (Bacillus cereus (strain G9842)).